The following is a 305-amino-acid chain: Axin interactor, dorsalization-associated protein B (305 aa).

Acidic residues predominate over residues 126 to 137 (ENLEVEEEEEDG). The segment at 126 to 146 (ENLEVEEEEEDGGAGAGSPDL) is disordered. Positions 153–220 (GTLLPRLPSE…RKEDTYVHFN (68 aa)) are axin-binding. Residues 156 to 303 (LPRLPSEPGM…LYLHLLQTLL (148 aa)) form the C2 Aida-type domain.

Belongs to the AIDA family.

Functionally, acts as a ventralizing factor during embryogenesis. Inhibits axin-mediated JNK activation by binding axin and disrupting axin homodimerization. This in turn antagonizes a Wnt/beta-catenin-independent dorsalization pathway activated by axin/JNK-signaling. In Xenopus laevis (African clawed frog), this protein is Axin interactor, dorsalization-associated protein B (aida-b).